The primary structure comprises 400 residues: Na(+)/H(+) antiporter NhaA (400 aa).

Transmembrane regions (helical) follow at residues 10–30, 60–80, 95–115, 126–146, 155–175, 178–198, 218–238, 265–285, 295–315, 334–354, and 364–384; these read FNLE…AMII, AHHW…GLEL, IILP…VYLF, GWAI…SLLG, VFLV…IALF, NDLS…LYLL, VAVL…ALFI, GILP…AGFG, IAAG…WLIF, AALL…LAFA, and LGII…LKAT.

Belongs to the NhaA Na(+)/H(+) (TC 2.A.33) antiporter family.

The protein localises to the cell inner membrane. It catalyses the reaction Na(+)(in) + 2 H(+)(out) = Na(+)(out) + 2 H(+)(in). In terms of biological role, na(+)/H(+) antiporter that extrudes sodium in exchange for external protons. This chain is Na(+)/H(+) antiporter NhaA, found in Psychrobacter cryohalolentis (strain ATCC BAA-1226 / DSM 17306 / VKM B-2378 / K5).